We begin with the raw amino-acid sequence, 314 residues long: Olfactory receptor 4Q2 (314 aa).

Over 1-26 the chain is Extracellular; the sequence is MDKNQTEVMREFFLSGFSQTPSIEAG. An N-linked (GlcNAc...) asparagine glycan is attached at N4. The chain crosses the membrane as a helical span at residues 27–47; it reads LFVLFLFFYMSIWVGNVLIMV. Residues 48–61 are Cytoplasmic-facing; the sequence is TVASDKYLNSSPMY. Residues 62-84 form a helical membrane-spanning segment; sequence FLLGNLSFLDLCYSTVTTPKLLA. The Extracellular segment spans residues 85 to 98; the sequence is DFFNHEKLISYDQC. C98 and C181 are oxidised to a cystine. The chain crosses the membrane as a helical span at residues 99-119; sequence IVQLFFLHFVGAAEMFLLTVM. The Cytoplasmic portion of the chain corresponds to 120-142; sequence AYDRYVAICRPLHYTTVMSRGLC. Residues 143–163 form a helical membrane-spanning segment; it reads CVLVAASWMGGFVHSTVQTIL. Over 164 to 196 the chain is Extracellular; that stretch reads TVHLPFCGPNQVENTFFCDVPPVIKLACADTFV. The helical transmembrane segment at 197-217 threads the bilayer; it reads IELLMVSNSGLISTISFVVLI. The Cytoplasmic portion of the chain corresponds to 218–236; sequence SSYTTILVKIRSKEGRRKA. A helical transmembrane segment spans residues 237-257; sequence LSTCASHLMVVTLFFGPCIFI. Residues 258–268 are Extracellular-facing; that stretch reads YARPFSTFSVD. The helical transmembrane segment at 269–289 threads the bilayer; the sequence is KMVSVLYNVITPMLNPLIYTL. Over 290-314 the chain is Cytoplasmic; that stretch reads RNKEVKSAMQKLWVRNGLTWKKQET.

The protein belongs to the G-protein coupled receptor 1 family.

Its subcellular location is the cell membrane. Odorant receptor. The sequence is that of Olfactory receptor 4Q2 (OR4Q2) from Homo sapiens (Human).